The sequence spans 159 residues: Nucleotide-binding protein PSPPH_4093 (159 aa).

This sequence belongs to the YajQ family.

In terms of biological role, nucleotide-binding protein. The chain is Nucleotide-binding protein PSPPH_4093 from Pseudomonas savastanoi pv. phaseolicola (strain 1448A / Race 6) (Pseudomonas syringae pv. phaseolicola (strain 1448A / Race 6)).